A 107-amino-acid chain; its full sequence is MPELEKHAFRMKLFAGKEVEYKKRHDEIWPELVALLHEAGVSDYSIHLDPETSILFGVLTRPKVHGMAALPEHPVMKKWWAHMADIMESNPDNSPVAKDLVTVFHLP.

Residue Y21 participates in substrate binding. H25 (proton donor) is an active-site residue. Substrate-binding positions include Y44 and 79–80; that span reads WW.

Belongs to the rhamnose mutarotase family. Homodimer.

The protein localises to the cytoplasm. It catalyses the reaction alpha-L-rhamnose = beta-L-rhamnose. It functions in the pathway carbohydrate metabolism; L-rhamnose metabolism. Involved in the anomeric conversion of L-rhamnose. The chain is L-rhamnose mutarotase from Agrobacterium fabrum (strain C58 / ATCC 33970) (Agrobacterium tumefaciens (strain C58)).